The primary structure comprises 233 residues: MGQKVHPNGIRLGIVKPWNSTWYANTKEFADNLDSDFKVRQYLKKELAKASISRIVIERPAKSIRVTIHTARPGIVIGKKGEDVEKLRKTVAEIAGVPAQINISEVRKPELDAKLVADSITSQLERRIMFRRAMKRAVQNAMRQGAKGIKVEVSGRLGGAEIARPEWYREGRVPLHTLRADIDYNTSEAHTTYGVLGVKVWIFKGEILGGMAAVEQAEKPAAQPKKQQRKGRK.

Positions 39-107 (VRQYLKKELA…PAQINISEVR (69 aa)) constitute a KH type-2 domain.

The protein belongs to the universal ribosomal protein uS3 family. In terms of assembly, part of the 30S ribosomal subunit. Forms a tight complex with proteins S10 and S14.

Functionally, binds the lower part of the 30S subunit head. Binds mRNA in the 70S ribosome, positioning it for translation. The polypeptide is Small ribosomal subunit protein uS3 (Photorhabdus laumondii subsp. laumondii (strain DSM 15139 / CIP 105565 / TT01) (Photorhabdus luminescens subsp. laumondii)).